Consider the following 586-residue polypeptide: U-box domain-containing protein 73 (586 aa).

The tract at residues 21–122 is disordered; it reads KADMSGLQRS…AAGADDGPTR (102 aa). Residues 50-60 are compositionally biased toward low complexity; it reads RSAPTSPLRTP. The region spanning 182–258 is the U-box domain; that stretch reads PIPIAHDGTL…SAWCLDHSDL (77 aa).

The enzyme catalyses S-ubiquitinyl-[E2 ubiquitin-conjugating enzyme]-L-cysteine + [acceptor protein]-L-lysine = [E2 ubiquitin-conjugating enzyme]-L-cysteine + N(6)-ubiquitinyl-[acceptor protein]-L-lysine.. Its pathway is protein modification; protein ubiquitination. Its function is as follows. Possesses E3 ubiquitin-protein ligase in vitro. This chain is U-box domain-containing protein 73 (PUB73), found in Oryza sativa subsp. japonica (Rice).